Here is a 284-residue protein sequence, read N- to C-terminus: Co-chaperone protein DjlA (284 aa).

The Periplasmic segment spans residues 1 to 6 (MHIFGK). The chain crosses the membrane as a helical span at residues 7 to 30 (ILGAFFGFLFGGPFGAIFGIFLGH). The Cytoplasmic portion of the chain corresponds to 31–284 (QFDKARRLNQ…ELIRKEKGIK (254 aa)). Residues 190-211 (QGGGFGGSQQQSHSGQQWQQPS) form a disordered region. Positions 197-211 (SQQQSHSGQQWQQPS) are enriched in low complexity. A J domain is found at 218 to 284 (DAYEVLGVSE…ELIRKEKGIK (67 aa)).

In terms of assembly, homodimer.

Its subcellular location is the cell inner membrane. In terms of biological role, regulatory DnaK co-chaperone. Direct interaction between DnaK and DjlA is needed for the induction of the wcaABCDE operon, involved in the synthesis of a colanic acid polysaccharide capsule, possibly through activation of the RcsB/RcsC phosphotransfer signaling pathway. The colanic acid capsule may help the bacterium survive conditions outside the host. This is Co-chaperone protein DjlA from Vibrio cholerae serotype O1 (strain ATCC 39315 / El Tor Inaba N16961).